A 326-amino-acid polypeptide reads, in one-letter code: ELAV-like protein 1 (326 aa).

N-acetylserine is present on S2. Position 2 is a phosphoserine (S2). The RRM 1 domain occupies 20-98; the sequence is TNLIVNYLPQ…KTIKVSYARP (79 aa). A phosphoserine mark is found at S100 and S158. Residues 106 to 186 form the RRM 2 domain; that stretch reads ANLYISGLPR…EPITVKFAAN (81 aa). A Glycyl lysine isopeptide (Lys-Gly) (interchain with G-Cter in SUMO2) cross-link involves residue K191. Residues S197 and S202 each carry the phosphoserine modification. Omega-N-methylarginine is present on R206. At R217 the chain carries Asymmetric dimethylarginine; by CARM1; alternate. An Omega-N-methylarginine; alternate modification is found at R217. Phosphoserine occurs at positions 221 and 318. The RRM 3 domain occupies 244–322; it reads WCIFIYNLGQ…KILQVSFKTN (79 aa).

Belongs to the RRM elav family. Monomer and homodimer (in vitro). Interacts with ANP32A. Interacts with ZNF385A; the interaction is indirect and mRNA-dependent and may regulate p53/TP53 expression. Identified in a mRNP complex, at least composed of DHX9, DDX3X, ELAVL1, HNRNPU, IGF2BP1, ILF3, PABPC1, PCBP2, PTBP2, STAU1, STAU2, SYNCRIP and YBX1. Interacts with AGO1 and AGO2. Interacts with IGF2BP1; the interaction is enhanced by SEPIN14P20 peptide RBPR. Interacts with IGF2BP2 and IGF2BP3. Interacts with HNRNPL. Interacts with DHX36; this interaction occurs in a RNA-dependent manner. Interacts with ILF3; this interaction occurs in a RNA-dependent manner. Interacts with PLEKHN1. Interacts with SHFL; the interaction increases in presence of RNA. Interacts with YBX1; interaction recruits ELAVL1 on C5-methylcytosine (m5C)-containing mRNAs, thereby promoting mRNA stability. Interacts with FXR1. In terms of processing, phosphorylated by MAPKAPK2. Phosphorylated by PRKCD. Methylated at Arg-217 by CARM1 in macrophages in response to LPS challenge. Ubiquitous. Detected in brain, liver, thymus and muscle.

The protein localises to the cytoplasm. Its subcellular location is the nucleus. The protein resides in the stress granule. It localises to the P-body. Functionally, RNA-binding protein that binds to the 3'-UTR region of mRNAs and increases their stability. Involved in embryonic stem cell (ESC) differentiation: preferentially binds mRNAs that are not methylated by N6-methyladenosine (m6A), stabilizing them, promoting ESC differentiation. Has also been shown to be capable of binding to m6A-containing mRNAs and contributes to MYC stability by binding to m6A-containing MYC mRNAs. Binds to poly-U elements and AU-rich elements (AREs) in the 3'-UTR of target mRNAs. Binds avidly to the AU-rich element in FOS and IL3/interleukin-3 mRNAs. In the case of the FOS AU-rich element, binds to a core element of 27 nucleotides that contain AUUUA, AUUUUA, and AUUUUUA motifs. Binds preferentially to the 5'-UUUU[AG]UUU-3' motif in vitro. With ZNF385A, binds the 3'-UTR of p53/TP53 mRNA to control their nuclear export induced by CDKN2A. Hence, may regulate p53/TP53 expression and mediate in part the CDKN2A anti-proliferative activity. May also bind with ZNF385A the CCNB1 mRNA. Increases the stability of the leptin mRNA harboring an AU-rich element (ARE) in its 3' UTR. This chain is ELAV-like protein 1 (ELAVL1), found in Homo sapiens (Human).